The primary structure comprises 422 residues: Putative nickel insertion protein (422 aa).

The protein belongs to the LarC family.

In Synechocystis sp. (strain ATCC 27184 / PCC 6803 / Kazusa), this protein is Putative nickel insertion protein.